The sequence spans 279 residues: uncharacterized protein (279 aa).

This is an uncharacterized protein from Caenorhabditis elegans.